The sequence spans 216 residues: Uracil phosphoribosyltransferase (216 aa).

5-phospho-alpha-D-ribose 1-diphosphate contacts are provided by residues R81, R106, and 135-143; that span reads DPMLATGSS. Uracil is bound by residues I200 and 205–207; that span reads GDA. D206 contacts 5-phospho-alpha-D-ribose 1-diphosphate.

Belongs to the UPRTase family. Requires Mg(2+) as cofactor.

The catalysed reaction is UMP + diphosphate = 5-phospho-alpha-D-ribose 1-diphosphate + uracil. It participates in pyrimidine metabolism; UMP biosynthesis via salvage pathway; UMP from uracil: step 1/1. Allosterically activated by GTP. In terms of biological role, catalyzes the conversion of uracil and 5-phospho-alpha-D-ribose 1-diphosphate (PRPP) to UMP and diphosphate. The chain is Uracil phosphoribosyltransferase (upp) from Porphyromonas gingivalis (strain ATCC 33277 / DSM 20709 / CIP 103683 / JCM 12257 / NCTC 11834 / 2561).